A 131-amino-acid polypeptide reads, in one-letter code: Fumarate reductase subunit C (131 aa).

Helical transmembrane passes span 30-50 (EGTAVPAVWFSIELIFGLFAL), 63-83 (FLQNPVIVIINLITLAAALLH), and 109-129 (IIKSLWAVTVVATIVILFVAL).

Belongs to the FrdC family. In terms of assembly, part of an enzyme complex containing four subunits: a flavoprotein (FrdA), an iron-sulfur protein (FrdB), and two hydrophobic anchor proteins (FrdC and FrdD).

Its subcellular location is the cell inner membrane. Two distinct, membrane-bound, FAD-containing enzymes are responsible for the catalysis of fumarate and succinate interconversion; fumarate reductase is used in anaerobic growth, and succinate dehydrogenase is used in aerobic growth. Anchors the catalytic components of the fumarate reductase complex to the cell inner membrane, binds quinones. The chain is Fumarate reductase subunit C from Shigella dysenteriae serotype 1 (strain Sd197).